A 122-amino-acid polypeptide reads, in one-letter code: Large ribosomal subunit protein uL14c (122 aa).

The protein belongs to the universal ribosomal protein uL14 family. In terms of assembly, part of the 50S ribosomal subunit.

Its subcellular location is the plastid. It localises to the chloroplast. Binds to 23S rRNA. This is Large ribosomal subunit protein uL14c from Daucus carota (Wild carrot).